Reading from the N-terminus, the 261-residue chain is MTTSLYWQTEGEGSDLVLIHGWGMNGAVWQPIVEKLSSQYRVHTVDLSGYGYSAELGSADFDEMVAQVLAQAPEKSAWLGWSLGGLIATQAALTAPDRVSQLITVASSPRFAAEKGWRGIKSAVLSQFTEQLKEDFTLTVERFMTLQAMGSPNAKQDIKQVKRAVLSRPAPNPSALATGLTILADIDLRESLSQLTMPVCRMYGRLDGLVPIKVAHDMDAFIPHSTKVVFEQASHAPFISHSDEFITELHRFLQPEDEFLI.

Residues 16–241 (LVLIHGWGMN…QASHAPFISH (226 aa)) form the AB hydrolase-1 domain. Substrate is bound by residues Trp22, 82-83 (SL), and 143-147 (FMTLQ). The active-site Nucleophile is Ser82. Residues Asp207 and His235 contribute to the active site. His235 is a substrate binding site.

Belongs to the AB hydrolase superfamily. Carboxylesterase BioH family. Monomer.

Its subcellular location is the cytoplasm. The enzyme catalyses 6-carboxyhexanoyl-[ACP] methyl ester + H2O = 6-carboxyhexanoyl-[ACP] + methanol + H(+). The protein operates within cofactor biosynthesis; biotin biosynthesis. Its function is as follows. The physiological role of BioH is to remove the methyl group introduced by BioC when the pimeloyl moiety is complete. It allows to synthesize pimeloyl-ACP via the fatty acid synthetic pathway through the hydrolysis of the ester bonds of pimeloyl-ACP esters. This is Pimeloyl-[acyl-carrier protein] methyl ester esterase from Aliivibrio salmonicida (strain LFI1238) (Vibrio salmonicida (strain LFI1238)).